A 516-amino-acid chain; its full sequence is Putative Rieske 2Fe-2S iron-sulfur protein MT3926 (516 aa).

In terms of domain architecture, Rieske spans 429–516; that stretch reads LYTFFKCLTD…RGHQLRSSRP (88 aa). Positions 469, 471, 489, and 492 each coordinate [2Fe-2S] cluster.

The cofactor is [2Fe-2S] cluster.

The protein is Putative Rieske 2Fe-2S iron-sulfur protein MT3926 of Mycobacterium tuberculosis (strain CDC 1551 / Oshkosh).